Consider the following 400-residue polypeptide: MSESVRTNTSIWSKGMLSVIVAQFLSAFGDNALLFATLALLKAQFYPDWSQPVLQMVFVGAYILFAPFVGQIADSFAKGRVMMVANGLKLAGAAGVCLGINPFVGYTLVGIGAAAYSPAKYGILGELTTGDKLVKANGLMEASTIAAILLGSVAGGVLADWHVIAALVACALAYAGAVAANLFIPKLVAARPGQSWRLSAMTRSFFCACVVLWRNGETRFSLVGTGLFWGAGVTLRFLLVLWVPVALGITDNATPTYLNAMVAVGIVVGAGAAAKLVTLETVSRCMPAGILIGVVVAIFSLQHALLPAYALLLLIGMLGGFFVVPLNALLQERGKKSVGAGNAIAVQNLGENSAMLLMLGLYSLAVLVGVPAVAIGIGFGVLFALAIAALWIWQRRQASY.

A run of 12 helical transmembrane segments spans residues 19–39 (VIVA…ATLA), 53–73 (VLQM…GQIA), 91–111 (AGAA…LVGI), 139–159 (LMEA…GVLA), 164–184 (IAAL…NLFI), 195–213 (SWRL…VVLW), 227–247 (LFWG…PVAL), 257–277 (YLNA…AKLV), 281–301 (TVSR…IFSL), 304–324 (ALLP…FFVV), 352–372 (NSAM…GVPA), and 373–393 (VAIG…LWIW).

Belongs to the major facilitator superfamily. LplT (TC 2.A.1.42) family.

The protein localises to the cell inner membrane. Functionally, catalyzes the facilitated diffusion of 2-acyl-glycero-3-phosphoethanolamine (2-acyl-GPE) into the cell. In Salmonella schwarzengrund (strain CVM19633), this protein is Lysophospholipid transporter LplT.